The following is a 237-amino-acid chain: Uridylate kinase (237 aa).

9 to 12 (KLSG) contacts ATP. Glycine 51 contributes to the UMP binding site. Positions 52 and 56 each coordinate ATP. UMP is bound by residues aspartate 71 and 132 to 139 (CGNPFFTT). The ATP site is built by threonine 159, tyrosine 165, and aspartate 168.

It belongs to the UMP kinase family. As to quaternary structure, homohexamer.

The protein resides in the cytoplasm. The catalysed reaction is UMP + ATP = UDP + ADP. It participates in pyrimidine metabolism; CTP biosynthesis via de novo pathway; UDP from UMP (UMPK route): step 1/1. With respect to regulation, inhibited by UTP. Functionally, catalyzes the reversible phosphorylation of UMP to UDP. This chain is Uridylate kinase, found in Prochlorococcus marinus (strain SARG / CCMP1375 / SS120).